A 298-amino-acid chain; its full sequence is Aspartate carbamoyltransferase catalytic subunit (298 aa).

Residues Arg50 and Thr51 each contribute to the carbamoyl phosphate site. Lys79 provides a ligand contact to L-aspartate. 3 residues coordinate carbamoyl phosphate: Arg100, His128, and Gln131. L-aspartate contacts are provided by Arg160 and Arg221. Residues Leu260 and Pro261 each coordinate carbamoyl phosphate.

The protein belongs to the aspartate/ornithine carbamoyltransferase superfamily. ATCase family. As to quaternary structure, heterooligomer of catalytic and regulatory chains.

It carries out the reaction carbamoyl phosphate + L-aspartate = N-carbamoyl-L-aspartate + phosphate + H(+). It functions in the pathway pyrimidine metabolism; UMP biosynthesis via de novo pathway; (S)-dihydroorotate from bicarbonate: step 2/3. In terms of biological role, catalyzes the condensation of carbamoyl phosphate and aspartate to form carbamoyl aspartate and inorganic phosphate, the committed step in the de novo pyrimidine nucleotide biosynthesis pathway. The sequence is that of Aspartate carbamoyltransferase catalytic subunit from Methanospirillum hungatei JF-1 (strain ATCC 27890 / DSM 864 / NBRC 100397 / JF-1).